The chain runs to 617 residues: Proline--tRNA ligase (617 aa).

This sequence belongs to the class-II aminoacyl-tRNA synthetase family. ProS type 1 subfamily. Homodimer.

The protein resides in the cytoplasm. It carries out the reaction tRNA(Pro) + L-proline + ATP = L-prolyl-tRNA(Pro) + AMP + diphosphate. In terms of biological role, catalyzes the attachment of proline to tRNA(Pro) in a two-step reaction: proline is first activated by ATP to form Pro-AMP and then transferred to the acceptor end of tRNA(Pro). As ProRS can inadvertently accommodate and process non-cognate amino acids such as alanine and cysteine, to avoid such errors it has two additional distinct editing activities against alanine. One activity is designated as 'pretransfer' editing and involves the tRNA(Pro)-independent hydrolysis of activated Ala-AMP. The other activity is designated 'posttransfer' editing and involves deacylation of mischarged Ala-tRNA(Pro). The misacylated Cys-tRNA(Pro) is not edited by ProRS. In Streptococcus pneumoniae serotype 19F (strain G54), this protein is Proline--tRNA ligase.